The primary structure comprises 484 residues: Regulatory protein ViaA (484 aa).

The protein belongs to the ViaA family. Homodimer. Interacts with RavA.

It localises to the cytoplasm. In terms of biological role, component of the RavA-ViaA chaperone complex, which may act on the membrane to optimize the function of some of the respiratory chains. ViaA stimulates the ATPase activity of RavA. This chain is Regulatory protein ViaA, found in Edwardsiella ictaluri (strain 93-146).